The chain runs to 867 residues: MIYTDAGVDEDKATIRPNQTHQFQKVQDEAKEWTKNKFLEFLNNFKLKKKIDKNNNNNNNEDNEDNNENENEYDENGIKKEKIDKSYYRQQVERMIKNDKSSLYIDFLHLEKFDKGLGKALLMEYFRLEPAIRQGLSIFIQKYFPSFMERVNKERIVLSICCYNVSTFVHIRELRSSRIGSLCSISGTVTRTSEVRPELVIGSFICKDCNTSSLPIAQQFKYTEPTKCLNPLCSNQRRWKINLEESTFTDWQKVRVQENNSEIPGGSVPRSLEIILRGDSVETARAGDTCTFVGTMNVIPDVSKMSIGNNAQIIKGVASSTKEGSNANGKDDFGGVGGLKDLGVREMNYRVCFFSQSVRSNVSTLSSINRKESGDNHGGHSHSVGIIDEDLEPESKESFLDSLPKKEKDSLKKMIKSKKIYQNLVNSICPSIFGHEEIKRGVLLMLFGGVHKKTPEKIRLRGDINVCIVGDPSTSKSTFLKYLVSFLPRTVYTSGKASSAAGLTATVVKDQESGDFNIEAGALMLADNGICCIDEFDKMEPGDQVAIHEAMEQQTISIAKAGIHASLNARTSILAAANPIGGRYDRNKTLKQNLNIGGPLMSRFDLFFVVLDECNPESDHRIAEHIVLTHQKREKAFNAPFSATEIKNYIKYTKFICPTIPDESVQLLVGHYDRLRQMDTSGSKTPAYRITVRQLESLVRLSESLARLHLDTKVLPKYVNEAARLLEKSIVHVETNDVILGDDDDDLVKNVENDNDNHAEEDGDDGIGKLTMNFSKYSQLSKLLVLQIKQSGKEKSGIKQIDLIDWYIKDQLESGIITDDEVTKETKITKMVINKMINKDNSLVVLVPNQYPDHRILIIHPNYSFDK.

The disordered stretch occupies residues 51–76 (IDKNNNNNNNEDNEDNNENENEYDEN). Positions 61-75 (EDNEDNNENENEYDE) are enriched in acidic residues. The MCM domain occupies 420-626 (IYQNLVNSIC…ESDHRIAEHI (207 aa)). ATP is bound by residues Ser473, Thr474, Lys476, Ser477, and Asn578. The Arginine finger signature appears at 602-605 (SRFD). ADP is bound by residues Arg693 and Glu696.

The protein belongs to the MCM family. In terms of assembly, component of the MCM2-7 complex. The complex forms a toroidal hexameric ring with the proposed subunit order MCM2-MCM6-MCM4-MCM7-MCM3-MCM5 (By simililarity).

It is found in the nucleus. It carries out the reaction ATP + H2O = ADP + phosphate + H(+). Functionally, acts as a component of the MCM2-7 complex (MCM complex) which is the replicative helicase essential for 'once per cell cycle' DNA replication initiation and elongation in eukaryotic cells. Core component of CDC45-MCM-GINS (CMG) helicase, the molecular machine that unwinds template DNA during replication, and around which the replisome is built. The active ATPase sites in the MCM2-7 ring are formed through the interaction surfaces of two neighboring subunits such that a critical structure of a conserved arginine finger motif is provided in trans relative to the ATP-binding site of the Walker A box of the adjacent subunit. The six ATPase active sites, however, are likely to contribute differentially to the complex helicase activity. In Dictyostelium discoideum (Social amoeba), this protein is DNA replication licensing factor mcm6 (mcm6).